Reading from the N-terminus, the 153-residue chain is Large ribosomal subunit protein bL9 (153 aa).

Belongs to the bacterial ribosomal protein bL9 family.

In terms of biological role, binds to the 23S rRNA. This chain is Large ribosomal subunit protein bL9, found in Synechococcus sp. (strain JA-3-3Ab) (Cyanobacteria bacterium Yellowstone A-Prime).